Here is a 159-residue protein sequence, read N- to C-terminus: Ribosomal RNA large subunit methyltransferase H (159 aa).

S-adenosyl-L-methionine is bound by residues Leu76, Gly108, and 127 to 132; that span reads FSKMTL.

It belongs to the RNA methyltransferase RlmH family. In terms of assembly, homodimer.

It is found in the cytoplasm. The enzyme catalyses pseudouridine(1915) in 23S rRNA + S-adenosyl-L-methionine = N(3)-methylpseudouridine(1915) in 23S rRNA + S-adenosyl-L-homocysteine + H(+). Functionally, specifically methylates the pseudouridine at position 1915 (m3Psi1915) in 23S rRNA. This chain is Ribosomal RNA large subunit methyltransferase H, found in Bacillus anthracis (strain CDC 684 / NRRL 3495).